We begin with the raw amino-acid sequence, 91 residues long: Small ribosomal subunit protein uS19 (91 aa).

Belongs to the universal ribosomal protein uS19 family.

Functionally, protein S19 forms a complex with S13 that binds strongly to the 16S ribosomal RNA. In Erythrobacter litoralis (strain HTCC2594), this protein is Small ribosomal subunit protein uS19.